The following is a 781-amino-acid chain: Catenin beta-1 (781 aa).

A2 is subject to N-acetylalanine. The tract at residues 2–23 (ATQADLMELDMAMEPDRKAAVS) is interaction with VCL. S23 carries the phosphoserine; by GSK3-beta; alternate modification. O-linked (GlcNAc) serine; alternate glycosylation is present at S23. Residue S29 is modified to Phosphoserine; by GSK3-beta. 2 positions are modified to phosphoserine; by GSK3-beta and HIPK2: S33 and S37. Residues 34-57 (GIHSGATTTAPSLSGKGNPEEEDV) form a disordered region. T41 carries the post-translational modification Phosphothreonine; by GSK3-beta. S45 is modified (phosphoserine). Residue K49 is modified to N6-acetyllysine. Y64 carries the phosphotyrosine; by PTK6 modification. Y142 bears the Phosphotyrosine; by FYN and PTK6 mark. ARM repeat units lie at residues 151–191 (RAIP…IMRS), 193–234 (QMVS…IFKS), 235–276 (GGIP…VRLA), 277–318 (GGLQ…ILAS), 319–360 (GGPQ…IVEA), 361–389 (GGMQ…RNLS), 400–441 (GLLG…VCQV), 442–484 (GGIE…AQNA), 489–530 (YGLP…LREQ), 531–571 (GAIP…EIVE), 594–636 (NTIP…AEGA), and 637–666 (TAPL…SEDK). The interval 156 to 178 (LTKLLNDEDQVVVNKAAVMVHQL) is interaction with BCL9. The residue at position 191 (S191) is a Phosphoserine; by CDK5. Position 246 is a phosphoserine; by CDK5 (S246). Y331 is subject to Phosphotyrosine; by PTK6. Phosphotyrosine; by SRC and PTK6 is present on Y333. S552 bears the Phosphoserine mark. T556 carries the post-translational modification (Microbial infection) Phosphothreonine. T556 carries the phosphothreonine modification. Position 619 is an S-nitrosocysteine (C619). Phosphoserine is present on S675. A disordered region spans residues 705 to 781 (EPLGYRQDDP…NQLAWFDTDL (77 aa)). Residues 734–745 (MMEHEMGGHHPG) are compositionally biased toward basic and acidic residues. The interval 772–781 (NQLAWFDTDL) is interaction with SCRIB.

It belongs to the beta-catenin family. As to quaternary structure, two separate complex-associated pools are found in the cytoplasm. The majority is present as component of an E-cadherin:catenin adhesion complex composed of at least E-cadherin/CDH1 and beta-catenin/CTNNB1, and possibly alpha-catenin/CTNNA1; the complex is located to adherens junctions. The stable association of CTNNA1 is controversial as CTNNA1 was shown not to bind to F-actin when assembled in the complex. Alternatively, the CTNNA1-containing complex may be linked to F-actin by other proteins such as LIMA1. Another cytoplasmic pool is part of a large complex containing AXIN1, AXIN2, APC, CSNK1A1 and GSK3B that promotes phosphorylation on N-terminal Ser and Thr residues and ubiquitination of CTNNB1 via BTRC and its subsequent degradation by the proteasome. Wnt-dependent activation of DVL antagonizes the action of GSK3B. When GSK3B activity is inhibited the complex dissociates, CTNNB1 is dephosphorylated and is no longer targeted for destruction. The stabilized protein translocates to the nucleus, where it binds TCF/LEF-1 family members, BCL9, BCL9L and possibly also RUVBL1 and CHD8. Binds CTNNBIP and EP300. CTNNB1 forms a ternary complex with LEF1 and EP300 that is disrupted by CTNNBIP1 binding. Interacts with TAX1BP3 (via the PDZ domain); this interaction inhibits the transcriptional activity of CTNNB1. Interacts with AJAP1, BAIAP1, CARM1, CTNNA3, CXADR and PCDH11Y. Binds NHERF1. Interacts with GLIS2 and MUC1. Interacts with SLC30A9. Interacts with XIRP1. Interacts directly with AXIN1; the interaction is regulated by CDK2 phosphorylation of AXIN1. Interacts with SCRIB. Interacts with RAPGEF2. Interacts with PTPRU (via the cytoplasmic juxtamembrane domain). Interacts with EMD. Interacts with TNIK and TCF7L2. Interacts with SESTD1 and TRPC4. Interacts with CAV1. Interacts with TRPV4. The TRPV4 and CTNNB1 complex can interact with CDH1. Interacts with VCL. Interacts with PTPRJ. Interacts with PKT7 and CDK2. Interacts with FAT1 (via the cytoplasmic domain). Interacts with NANOS1 and NDRG2. Interacts with isoform 1 of NEK2. Interacts with both isoform 1 and isoform 2 of CDK5. Interacts with PTK6. Interacts with SOX7; this interaction may lead to proteasomal degradation of active CTNNB1 and thus inhibition of Wnt/beta-catenin-stimulated transcription. Identified in a complex with HINT1 and MITF. Interacts with FHIT. The CTNNB1 and TCF7L2/TCF4 complex interacts with PML (isoform PML-4). Interacts with FERMT2. Identified in a complex with TCF7L2/TCF4 and FERMT2. Interacts with RORA. May interact with P-cadherin/CDH3. Interacts with RNF220. Interacts with CTNND2. Interacts (via the C-terminal region) with CBY1. The complex composed, at least, of APC, CTNNB1 and GSK3B interacts with JPT1; the interaction requires the inactive form of GSK3B (phosphorylated at 'Ser-9'). Interacts with DLG5. Interacts with FAM53B; promoting translocation to the nucleus. Interacts with TMEM170B. Interacts with AHI1. Interacts with GID8. Component of an cadherin:catenin adhesion complex composed of at least of CDH26, beta-catenin/CTNNB1, alpha-catenin/CTNNA1 and p120 catenin/CTNND1. Forms a complex comprising APPL1, RUVBL2, APPL2, HDAC1 and HDAC2. Interacts with IRF2BPL; mediates the ubiquitination and degradation of CTNNB1. Interacts with AMFR. Interacts with LMBR1L. Interacts with SOX30; prevents interaction of CTNNB1 with TCF7L2/TCF4 and leads to inhibition of Wnt signaling. Interacts with SOX9; inhibiting CTNNB1 activity by competing with the binding sites of TCF/LEF within CTNNB1, thereby inhibiting the Wnt signaling. Interacts with SPN/CD43 cytoplasmic tail. Interacts (when phosphorylated at Tyr-333) with isoform M2 of PKM (PKM2); promoting transcription activation. Interacts with PKP2 (via HEAD domain). Interacts with CDH1. Interacts (when unphosphorylated) with FLYWCH1, perhaps preventing interaction of CTNNB1 with TCF4, and thereby regulating transcription activation; phosphorylation of CTNNB1 may inhibit the interaction. Interacts (via the central armadillo domains) with probable transcriptional regulator ADNP (via N-terminal region); interaction is direct and stabilizes CTNNB1 by modulating its phosphorylation by glycogen synthase kinase-3 beta GSK3B. Interacts with NR5A2. Interacts with DSG2; the interaction promotes localization of CTNNB1 at cell junctions thus reducing its nuclear localization and subsequent transcription of CTNNB1/TCF-target genes. In terms of assembly, (Microbial infection) Interacts with herpes virus 8 protein vPK; this interaction inhibits the Wnt signaling pathway. Phosphorylation at Ser-552 by AMPK promotes stabilization of the protein, enhancing TCF/LEF-mediated transcription. Phosphorylation by GSK3B requires prior phosphorylation of Ser-45 by another kinase. Phosphorylation proceeds then from Thr-41 to Ser-37 and Ser-33. Phosphorylated by NEK2. EGF stimulates tyrosine phosphorylation. Phosphorylated on Ser-33 and Ser-37 by HIPK2 and GSK3B, this phosphorylation triggers proteasomal degradation. Phosphorylation on Ser-191 and Ser-246 by CDK5. Phosphorylation by CDK2 regulates insulin internalization. Phosphorylation by PTK6 at Tyr-64, Tyr-142, Tyr-331 and/or Tyr-333 with the predominant site at Tyr-64 is not essential for inhibition of transcriptional activity. Phosphorylation by SRC at Tyr-333 promotes interaction with isoform M2 of PKM (PKM2); promoting transcription activation. In terms of processing, ubiquitinated by the SCF(BTRC) E3 ligase complex when phosphorylated by GSK3B, leading to its degradation. Ubiquitinated by a E3 ubiquitin ligase complex containing UBE2D1, SIAH1, CACYBP/SIP, SKP1, APC and TBL1X, leading to its subsequent proteasomal degradation. Ubiquitinated and degraded following interaction with SOX9. Ubiquitinated via 'Lys-11'- and 'Lys-29'-linked ubiquitin chains by UBR5, leading to its stabilization. Post-translationally, S-nitrosylation at Cys-619 within adherens junctions promotes VEGF-induced, NO-dependent endothelial cell permeability by disrupting interaction with E-cadherin, thus mediating disassembly adherens junctions. O-glycosylation at Ser-23 decreases nuclear localization and transcriptional activity, and increases localization to the plasma membrane and interaction with E-cadherin CDH1. In terms of processing, deacetylated at Lys-49 by SIRT1. Post-translationally, phosphorylated at Thr-556 by herpes virus 1/HHV-1 leading to CTNNB1 inhibition. As to expression, expressed in several hair follicle cell types: basal and peripheral matrix cells, and cells of the outer and inner root sheaths. Expressed in colon. Present in cortical neurons (at protein level). Expressed in breast cancer tissues (at protein level).

Its subcellular location is the cytoplasm. The protein resides in the nucleus. It is found in the cytoskeleton. The protein localises to the cell junction. It localises to the adherens junction. Its subcellular location is the cell membrane. The protein resides in the microtubule organizing center. It is found in the centrosome. The protein localises to the spindle pole. It localises to the synapse. Its subcellular location is the cilium basal body. Key downstream component of the canonical Wnt signaling pathway. In the absence of Wnt, forms a complex with AXIN1, AXIN2, APC, CSNK1A1 and GSK3B that promotes phosphorylation on N-terminal Ser and Thr residues and ubiquitination of CTNNB1 via BTRC and its subsequent degradation by the proteasome. In the presence of Wnt ligand, CTNNB1 is not ubiquitinated and accumulates in the nucleus, where it acts as a coactivator for transcription factors of the TCF/LEF family, leading to activate Wnt responsive genes. Also acts as a coactivator for other transcription factors, such as NR5A2. Promotes epithelial to mesenchymal transition/mesenchymal to epithelial transition (EMT/MET) via driving transcription of CTNNB1/TCF-target genes. Involved in the regulation of cell adhesion, as component of an E-cadherin:catenin adhesion complex. Acts as a negative regulator of centrosome cohesion. Involved in the CDK2/PTPN6/CTNNB1/CEACAM1 pathway of insulin internalization. Blocks anoikis of malignant kidney and intestinal epithelial cells and promotes their anchorage-independent growth by down-regulating DAPK2. Disrupts PML function and PML-NB formation by inhibiting RANBP2-mediated sumoylation of PML. Promotes neurogenesis by maintaining sympathetic neuroblasts within the cell cycle. Involved in chondrocyte differentiation via interaction with SOX9: SOX9-binding competes with the binding sites of TCF/LEF within CTNNB1, thereby inhibiting the Wnt signaling. Acts as a positive regulator of odontoblast differentiation during mesenchymal tooth germ formation, via promoting the transcription of differentiation factors such as LEF1, BMP2 and BMP4. Activity is repressed in a MSX1-mediated manner at the bell stage of mesenchymal tooth germ formation which prevents premature differentiation of odontoblasts. This chain is Catenin beta-1, found in Homo sapiens (Human).